Consider the following 163-residue polypeptide: Cyanate hydratase (163 aa).

Active-site residues include arginine 103, glutamate 106, and serine 129.

It belongs to the cyanase family.

The enzyme catalyses cyanate + hydrogencarbonate + 3 H(+) = NH4(+) + 2 CO2. Its function is as follows. Catalyzes the reaction of cyanate with bicarbonate to produce ammonia and carbon dioxide. This chain is Cyanate hydratase, found in Paracoccidioides brasiliensis (strain Pb18).